A 323-amino-acid polypeptide reads, in one-letter code: Prenyl transferase (323 aa).

Isopentenyl diphosphate is bound by residues Lys-46, Arg-49, and His-81. Residues Asp-88 and Asp-92 each contribute to the Mg(2+) site. An an all-trans-polyprenyl diphosphate-binding site is contributed by Arg-97. Arg-98 contributes to the isopentenyl diphosphate binding site. An all-trans-polyprenyl diphosphate-binding residues include Lys-174, Thr-175, and Gln-212.

This sequence belongs to the FPP/GGPP synthase family. Requires Mg(2+) as cofactor.

The protein resides in the plastid. It localises to the cyanelle. Possible role in synthesis of the nonaprenyl side chain of plastoquinone or in synthesis of other prenyl chains such as undekaprenyl pyrophosphate. In Cyanophora paradoxa, this protein is Prenyl transferase (preA).